The chain runs to 793 residues: Acetyl-CoA decarbonylase/synthase complex subunit alpha (793 aa).

Residues Cys55, Cys58, Cys63, and Cys73 each coordinate [4Fe-4S] cluster. His96 lines the CO pocket. 3 residues coordinate [Ni-4Fe-4S] cluster: His229, Cys257, and Cys309. 4Fe-4S ferredoxin-type domains follow at residues 393–422 and 432–461; these read EQQF…ISEM and EPFS…LKLY. The [4Fe-4S] cluster site is built by Cys403, Cys406, Cys409, Cys413, Cys441, Cys444, Cys447, and Cys451. Cys509, Cys538, and Cys573 together coordinate [Ni-4Fe-4S] cluster.

Belongs to the Ni-containing carbon monoxide dehydrogenase family. As to quaternary structure, heterotetramer of two alpha and two epsilon subunits. The ACDS complex is made up of alpha, epsilon, beta, gamma and delta subunits with a probable stoichiometry of (alpha(2)epsilon(2))(4)-beta(8)-(gamma(1)delta(1))(8). The cofactor is [4Fe-4S] cluster. Requires [Ni-4Fe-4S] cluster as cofactor.

The catalysed reaction is CO + 2 oxidized [2Fe-2S]-[ferredoxin] + H2O = 2 reduced [2Fe-2S]-[ferredoxin] + CO2 + 2 H(+). In terms of biological role, part of the ACDS complex that catalyzes the reversible cleavage of acetyl-CoA, allowing autotrophic growth from CO(2). The alpha-epsilon subcomponent functions as a carbon monoxide dehydrogenase. The protein is Acetyl-CoA decarbonylase/synthase complex subunit alpha of Methanothrix soehngenii (Methanosaeta concilii).